A 670-amino-acid chain; its full sequence is UvrABC system protein B (670 aa).

The Helicase ATP-binding domain maps to 25-412; that stretch reads EGLEAGLSHQ…AGRVIEQVVR (388 aa). Position 38 to 45 (38 to 45) interacts with ATP; the sequence is GVTGSGKT. The Beta-hairpin signature appears at 91 to 114; it reads YYDYYQPEAYVPSSDTYIEKDSSI. A Helicase C-terminal domain is found at 429–582; it reads QVDDLLSQIR…QIAFNEAHGI (154 aa). The UVR domain occupies 631–666; that stretch reads SKRIRQLEEKMYQLARDLEFEAAAQLRDEIQTLRER.

This sequence belongs to the UvrB family. Forms a heterotetramer with UvrA during the search for lesions. Interacts with UvrC in an incision complex.

The protein resides in the cytoplasm. In terms of biological role, the UvrABC repair system catalyzes the recognition and processing of DNA lesions. A damage recognition complex composed of 2 UvrA and 2 UvrB subunits scans DNA for abnormalities. Upon binding of the UvrA(2)B(2) complex to a putative damaged site, the DNA wraps around one UvrB monomer. DNA wrap is dependent on ATP binding by UvrB and probably causes local melting of the DNA helix, facilitating insertion of UvrB beta-hairpin between the DNA strands. Then UvrB probes one DNA strand for the presence of a lesion. If a lesion is found the UvrA subunits dissociate and the UvrB-DNA preincision complex is formed. This complex is subsequently bound by UvrC and the second UvrB is released. If no lesion is found, the DNA wraps around the other UvrB subunit that will check the other stand for damage. The sequence is that of UvrABC system protein B from Pseudomonas aeruginosa (strain ATCC 15692 / DSM 22644 / CIP 104116 / JCM 14847 / LMG 12228 / 1C / PRS 101 / PAO1).